The primary structure comprises 579 residues: Glutamine--tRNA ligase (579 aa).

The 'HIGH' region signature appears at 41-51; the sequence is PEPNGYLHIGH. Residues 42–44 and 48–54 each bind ATP; these read EPN and HIGHAKA. The L-glutamine site is built by aspartate 74 and tyrosine 218. ATP contacts are provided by residues threonine 237, 285–286, and 293–295; these read RL and MSK. A 'KMSKS' region motif is present at residues 292-296; that stretch reads VMSKR.

It belongs to the class-I aminoacyl-tRNA synthetase family. In terms of assembly, monomer.

It localises to the cytoplasm. It carries out the reaction tRNA(Gln) + L-glutamine + ATP = L-glutaminyl-tRNA(Gln) + AMP + diphosphate. This chain is Glutamine--tRNA ligase, found in Xanthomonas axonopodis pv. citri (strain 306).